Reading from the N-terminus, the 124-residue chain is Fluoride-specific ion channel FluC (124 aa).

Transmembrane regions (helical) follow at residues Met1–Val21, Thr36–Val56, Thr70–Ile90, and Leu100–Ile120. Gly74 and Thr77 together coordinate Na(+).

It belongs to the fluoride channel Fluc/FEX (TC 1.A.43) family.

The protein localises to the cell inner membrane. It carries out the reaction fluoride(in) = fluoride(out). With respect to regulation, na(+) is not transported, but it plays an essential structural role and its presence is essential for fluoride channel function. Fluoride-specific ion channel. Important for reducing fluoride concentration in the cell, thus reducing its toxicity. This Methylobacterium sp. (strain 4-46) protein is Fluoride-specific ion channel FluC.